Reading from the N-terminus, the 406-residue chain is Heparan sulfate glucosamine 3-O-sulfotransferase 3A1 (406 aa).

Residues 1-24 (MAPPGPASALSTSAEPLSRSIFRK) are Cytoplasmic-facing. The chain crosses the membrane as a helical; Signal-anchor for type II membrane protein span at residues 25–43 (FLLMLCSLLTSLYVFYCLA). At 44–406 (ERCQTLSGPV…MTGHDFGWDG (363 aa)) the chain is on the lumenal side. The span at 92-102 (QLPQWRRRRPP) shows a compositional bias: basic residues. A disordered region spans residues 92-134 (QLPQWRRRRPPAPRDDGEEAAWEEESPGLSGGPGGSGAGSTVA). Residues 107-117 (DGEEAAWEEES) are compositionally biased toward acidic residues. Gly residues predominate over residues 120-129 (LSGGPGGSGA). 162 to 166 (KGGTR) is a binding site for 3'-phosphoadenylyl sulfate. Substrate contacts are provided by residues Arg-166, 184–190 (EPHFFDR), and 215–218 (KTPS). 3'-phosphoadenylyl sulfate-binding residues include Arg-243 and Ser-251. 255-259 (QTLSK) provides a ligand contact to substrate. A glycan (N-linked (GlcNAc...) asparagine) is linked at Asn-273. 283-284 (WS) contributes to the substrate binding site. N-linked (GlcNAc...) asparagine glycosylation occurs at Asn-344. A disulfide bond links Cys-351 and Cys-363. Substrate is bound at residue 367 to 370 (TKGR). 368–372 (KGRTH) is a 3'-phosphoadenylyl sulfate binding site.

This sequence belongs to the sulfotransferase 1 family. As to expression, ubiquitous. Most abundant in heart and placenta, followed by liver and kidney.

The protein resides in the golgi apparatus membrane. The catalysed reaction is alpha-D-glucosaminyl-[heparan sulfate](n) + 3'-phosphoadenylyl sulfate = 3-sulfo-alpha-D-glucosaminyl-[heparan sulfate](n) + adenosine 3',5'-bisphosphate + H(+). In terms of biological role, sulfotransferase that utilizes 3'-phospho-5'-adenylyl sulfate (PAPS) to catalyze the transfer of a sulfo group to an N-unsubstituted glucosamine linked to a 2-O-sulfo iduronic acid unit on heparan sulfate. Catalyzes the O-sulfation of glucosamine in IdoUA2S-GlcNS and also in IdoUA2S-GlcNH2. The substrate-specific O-sulfation generates an enzyme-modified heparan sulfate which acts as a binding receptor to Herpes simplex virus-1 (HSV-1) and permits its entry. Unlike HS3ST1/3-OST-1, does not convert non-anticoagulant heparan sulfate to anticoagulant heparan sulfate. The chain is Heparan sulfate glucosamine 3-O-sulfotransferase 3A1 (HS3ST3A1) from Homo sapiens (Human).